The chain runs to 372 residues: Glutamate 5-kinase (372 aa).

An ATP-binding site is contributed by lysine 14. Serine 54, aspartate 141, and asparagine 153 together coordinate substrate. 173-174 (TD) contributes to the ATP binding site. One can recognise a PUA domain in the interval 280–358 (RGHVVIDAGA…GEIETVLGYM (79 aa)).

The protein belongs to the glutamate 5-kinase family.

It localises to the cytoplasm. It carries out the reaction L-glutamate + ATP = L-glutamyl 5-phosphate + ADP. The protein operates within amino-acid biosynthesis; L-proline biosynthesis; L-glutamate 5-semialdehyde from L-glutamate: step 1/2. Its function is as follows. Catalyzes the transfer of a phosphate group to glutamate to form L-glutamate 5-phosphate. The protein is Glutamate 5-kinase of Burkholderia ambifaria (strain ATCC BAA-244 / DSM 16087 / CCUG 44356 / LMG 19182 / AMMD) (Burkholderia cepacia (strain AMMD)).